Consider the following 121-residue polypeptide: Neuropeptide-like protein 7 (121 aa).

A signal peptide spans 1-22; it reads MYIKAALLIVVLFGVASQITSA.

Its function is as follows. May regulate lifespan in response to food availability and oxidative stress. This chain is Neuropeptide-like protein 7, found in Caenorhabditis elegans.